We begin with the raw amino-acid sequence, 333 residues long: tRNA N6-adenosine threonylcarbamoyltransferase (333 aa).

Residues His-111 and His-115 each coordinate Fe cation. Residues Leu-134–Gly-138, Asp-167, Gly-180, and Asn-272 contribute to the substrate site. Asp-300 serves as a coordination point for Fe cation.

It belongs to the KAE1 / TsaD family. Fe(2+) is required as a cofactor.

The protein localises to the cytoplasm. The enzyme catalyses L-threonylcarbamoyladenylate + adenosine(37) in tRNA = N(6)-L-threonylcarbamoyladenosine(37) in tRNA + AMP + H(+). Functionally, required for the formation of a threonylcarbamoyl group on adenosine at position 37 (t(6)A37) in tRNAs that read codons beginning with adenine. Is involved in the transfer of the threonylcarbamoyl moiety of threonylcarbamoyl-AMP (TC-AMP) to the N6 group of A37, together with TsaE and TsaB. TsaD likely plays a direct catalytic role in this reaction. The chain is tRNA N6-adenosine threonylcarbamoyltransferase from Hamiltonella defensa subsp. Acyrthosiphon pisum (strain 5AT).